A 417-amino-acid chain; its full sequence is Multifunctional CCA protein (417 aa).

Gly-8 and Arg-11 together coordinate ATP. CTP is bound by residues Gly-8 and Arg-11. The Mg(2+) site is built by Asp-21 and Asp-23. Arg-91, Arg-137, and Arg-140 together coordinate ATP. The CTP site is built by Arg-91, Arg-137, and Arg-140. One can recognise an HD domain in the interval 225 to 326 (SGIHTLMTLQ…LNVLKKTDAF (102 aa)).

The protein belongs to the tRNA nucleotidyltransferase/poly(A) polymerase family. Bacterial CCA-adding enzyme type 1 subfamily. Monomer. Can also form homodimers and oligomers. Mg(2+) serves as cofactor. Requires Ni(2+) as cofactor.

The catalysed reaction is a tRNA precursor + 2 CTP + ATP = a tRNA with a 3' CCA end + 3 diphosphate. It catalyses the reaction a tRNA with a 3' CCA end + 2 CTP + ATP = a tRNA with a 3' CCACCA end + 3 diphosphate. Functionally, catalyzes the addition and repair of the essential 3'-terminal CCA sequence in tRNAs without using a nucleic acid template. Adds these three nucleotides in the order of C, C, and A to the tRNA nucleotide-73, using CTP and ATP as substrates and producing inorganic pyrophosphate. tRNA 3'-terminal CCA addition is required both for tRNA processing and repair. Also involved in tRNA surveillance by mediating tandem CCA addition to generate a CCACCA at the 3' terminus of unstable tRNAs. While stable tRNAs receive only 3'-terminal CCA, unstable tRNAs are marked with CCACCA and rapidly degraded. This is Multifunctional CCA protein from Neisseria meningitidis serogroup A / serotype 4A (strain DSM 15465 / Z2491).